The primary structure comprises 477 residues: Cysteine--tRNA ligase (477 aa).

Residue Cys29 participates in Zn(2+) binding. The short motif at 31-41 (PTVYNYFHVGN) is the 'HIGH' region element. Zn(2+) contacts are provided by Cys209, His234, and Glu238. Residues 267–271 (KMSKS) carry the 'KMSKS' region motif. Lys270 contacts ATP.

It belongs to the class-I aminoacyl-tRNA synthetase family. As to quaternary structure, monomer. Requires Zn(2+) as cofactor.

It localises to the cytoplasm. It carries out the reaction tRNA(Cys) + L-cysteine + ATP = L-cysteinyl-tRNA(Cys) + AMP + diphosphate. In Desulfitobacterium hafniense (strain DSM 10664 / DCB-2), this protein is Cysteine--tRNA ligase.